The primary structure comprises 206 residues: Ras-related protein RABG3a (206 aa).

15–22 (GDSGVGKT) serves as a coordination point for GTP. The short motif at 37–45 (YKATIGADF) is the Effector region element. GTP is bound by residues 63-67 (DTAGQ), 125-128 (NKID), and 158-159 (SA). Residues Cys-204 and Cys-206 are each lipidated (S-geranylgeranyl cysteine). Residue Cys-206 is modified to Cysteine methyl ester.

The protein belongs to the small GTPase superfamily. Rab family.

The protein localises to the cell membrane. Its function is as follows. Intracellular vesicle trafficking and protein transport. The protein is Ras-related protein RABG3a (RABG3A) of Arabidopsis thaliana (Mouse-ear cress).